Here is a 1409-residue protein sequence, read N- to C-terminus: DNA-directed RNA polymerase subunit beta' (1409 aa).

Positions 70, 72, 85, and 88 each coordinate Zn(2+). Mg(2+) contacts are provided by D461, D463, and D465. Positions 833, 907, 914, and 917 each coordinate Zn(2+). The disordered stretch occupies residues 1389–1409 (EPVAQAAESEDVPDVSQQEAA).

The protein belongs to the RNA polymerase beta' chain family. The RNAP catalytic core consists of 2 alpha, 1 beta, 1 beta' and 1 omega subunit. When a sigma factor is associated with the core the holoenzyme is formed, which can initiate transcription. Requires Mg(2+) as cofactor. Zn(2+) is required as a cofactor.

It catalyses the reaction RNA(n) + a ribonucleoside 5'-triphosphate = RNA(n+1) + diphosphate. Functionally, DNA-dependent RNA polymerase catalyzes the transcription of DNA into RNA using the four ribonucleoside triphosphates as substrates. The sequence is that of DNA-directed RNA polymerase subunit beta' from Pelobacter propionicus (strain DSM 2379 / NBRC 103807 / OttBd1).